Reading from the N-terminus, the 275-residue chain is Anamorsin homolog (275 aa).

The segment at 1–147 (MTSASIHIGS…QSASSAAATG (147 aa)) is N-terminal SAM-like domain. Residues 148–183 (RINLGGAKTKVKLSLDDDDDDQLIDEDDLLNGGGGM) form a linker region. Residues cysteine 203, cysteine 209, cysteine 212, and cysteine 214 each coordinate [2Fe-2S] cluster. Positions 203–214 (CGGRKACDNCTC) are fe-S binding site A. Residues cysteine 238, cysteine 241, cysteine 249, and cysteine 252 each contribute to the [4Fe-4S] cluster site. 2 short sequence motifs (cx2C motif) span residues 238–241 (CGNC) and 249–252 (CAGC). Residues 238–252 (CGNCAKGDAFRCAGC) form a fe-S binding site B region.

This sequence belongs to the anamorsin family. As to quaternary structure, monomer. [2Fe-2S] cluster is required as a cofactor. Requires [4Fe-4S] cluster as cofactor.

It localises to the cytoplasm. The protein resides in the mitochondrion intermembrane space. In terms of biological role, component of the cytosolic iron-sulfur (Fe-S) protein assembly (CIA) machinery. Required for the maturation of extramitochondrial Fe-S proteins. Part of an electron transfer chain functioning in an early step of cytosolic Fe-S biogenesis, facilitating the de novo assembly of a [4Fe-4S] cluster on the cytosolic Fe-S scaffold complex. Electrons are transferred from NADPH via a FAD- and FMN-containing diflavin oxidoreductase. Together with the diflavin oxidoreductase, also required for the assembly of the diferric tyrosyl radical cofactor of ribonucleotide reductase (RNR), probably by providing electrons for reduction during radical cofactor maturation in the catalytic small subunit. The polypeptide is Anamorsin homolog (Thalassiosira pseudonana (Marine diatom)).